Reading from the N-terminus, the 549-residue chain is MFESDLSFYSALLILCCPISIVFFKKFPIKGYTGANKVSLFLQCLIAILNLNILYSFINSLTITLGHDGSSANTLTIDPITTTQQQGHVDYTPIKVSGYTFKNQVATKNLQCDSIVYDQDLDLQVSQAVDLNKPEDLKFFRDKLNELRSLNNIYDLFFQDNEDEVEESILERKWYKFCGSAVWLDKYGVYFMVNRIAYSKKGTRNNPTISVLAGQVFDKNWIELTGKKFPFSGLEFPTILPHYIDEGKEAEKVILGAEDPRVILHEYTNENGIRIQEPLIAFNALSTEVDWKRAMHIYRPLHDPHRIIRLSIENYAPREKEKNWAPFIDGNNLNFVYNFPLRILRCNINNGDCQKVSGPDFNDKSHENAGKLRGGTNLVEIPSQSLPKHLRSRKYWFGIARSHITDCGCVGELYRPHLILISRNKKSDQYELNYVSDLIDFNVNPEPWTPGKTTCSDGKSVLIPNSVAFIKDDYMSVTFSEADKTNKLINAKGWLTYITKMLEFTQERLKDESSDPVLESRLLSKCSTFLAQQYCALSKDTMGWDKLSR.

Topologically, residues 1–37 (MFESDLSFYSALLILCCPISIVFFKKFPIKGYTGANK) are cytoplasmic. Residues 38–58 (VSLFLQCLIAILNLNILYSFI) form a helical membrane-spanning segment. Topologically, residues 59 to 549 (NSLTITLGHD…DTMGWDKLSR (491 aa)) are extracellular.

The protein belongs to the BMT family.

The protein resides in the membrane. Its function is as follows. Beta-mannosyltransferase involved in cell wall biosynthesis. Required for addition of the second beta-mannose residue to acid-stable fraction of cell wall phosphopeptidomannan, and in elongation of beta-mannose chains on the phosphopeptidomannan acid-labile fraction. The polypeptide is Beta-mannosyltransferase 3 (BMT3) (Candida albicans (strain SC5314 / ATCC MYA-2876) (Yeast)).